A 1481-amino-acid chain; its full sequence is Cystic fibrosis transmembrane conductance regulator (1481 aa).

Residues 1–77 (MQRSPLEKAS…KLINALRRCF (77 aa)) lie on the Cytoplasmic side of the membrane. Residues 78–98 (FWRFTFYGILLYLGEVTKAVQ) form a helical membrane-spanning segment. An ABC transmembrane type-1 1 domain is found at 81–365 (FTFYGILLYL…WAVQTWYDSL (285 aa)). The Extracellular portion of the chain corresponds to 99 to 122 (PLLLGRIIASYDPDNKTERSIAIY). A helical membrane pass occupies residues 123–146 (LGIGLCLLFIVRTLLLHPAIFGLH). At 147 to 195 (HIGMQMRIAMFSLIYKKTLKLSSRVLDKISIGQLVSLLSNNLNKFDEGL) the chain is on the cytoplasmic side. The helical transmembrane segment at 196-216 (ALAHFVWIAPLQVALLMGLIW) threads the bilayer. At 217–222 (ELLQAS) the chain is on the extracellular side. Residues 223–243 (AFCGLGFLIVLALFQAGLGRM) form a helical membrane-spanning segment. Over 244-298 (MMKYRDQRAGKINERLVITSEMIENIQSVKAYCWEEAMEKIIENLRQTELKLTRK) the chain is Cytoplasmic. The chain crosses the membrane as a helical span at residues 299–319 (AAYVRYFNSSAFFFSGFFVVF). The Extracellular portion of the chain corresponds to 320–339 (LSVLPYALIKGIVLRKIFTT). A helical membrane pass occupies residues 340 to 358 (ISFCIVLRMAVTRQFPWAV). The Cytoplasmic segment spans residues 359 to 858 (QTWYDSLGAI…YLRYITLHKS (500 aa)). ATP-binding positions include tryptophan 401, serine 434, 458-465 (GSTGAGKT), and glutamine 493. Positions 423-646 (NGDDNLFFSN…RPDFSSKLMG (224 aa)) constitute an ABC transporter 1 domain. Residue cysteine 524 is the site of S-palmitoyl cysteine attachment. Phosphoserine is present on residues serine 549 and serine 660. The disordered R region stretch occupies residues 654 to 831 (SSERRNSILT…EEINEEDLKE (178 aa)). Residue serine 670 is modified to Phosphoserine; by PKA. At serine 686 the chain carries Phosphoserine. A Glycyl lysine isopeptide (Lys-Gly) (interchain with G-Cter in ubiquitin) cross-link involves residue lysine 688. Residues serine 700 and serine 712 each carry the phosphoserine modification. Threonine 717 carries the post-translational modification Phosphothreonine. Phosphoserine is present on residues serine 737, serine 753, serine 768, serine 790, serine 795, and serine 813. The helical transmembrane segment at 859 to 879 (LIFVLIWCLVIFLAEVAASLV) threads the bilayer. The region spanning 859-1155 (LIFVLIWCLV…AVNSSIDVDS (297 aa)) is the ABC transmembrane type-1 2 domain. Over 880 to 918 (VLWLLGNTPFQDKGNSTYSRNNSYAVIITNTSSYYVFYI) the chain is Extracellular. 3 N-linked (GlcNAc...) asparagine glycosylation sites follow: asparagine 894, asparagine 900, and asparagine 909. A discontinuously helical transmembrane segment spans residues 919–939 (YVGVADTLLALGFFRGLPLVH). The Cytoplasmic portion of the chain corresponds to 940-990 (TLITVSKMLHHKMLHSVLQAPMSTLNTLKAGGILNRFSKDIAILDDLLPLT). Residues 991-1011 (IFDFIQLLLIVIGAIAVVSVL) form a helical membrane-spanning segment. The Extracellular segment spans residues 1012 to 1013 (QP). A helical membrane pass occupies residues 1014–1034 (YIFLATVPVIAAFILLRAYFL). Residues 1035–1095 (QTSQQLKQLE…TANWFLYLST (61 aa)) are Cytoplasmic-facing. Residues 1096–1116 (LRWFQMRIEMIFVIFFIAVTF) traverse the membrane as a helical segment. The Extracellular portion of the chain corresponds to 1117 to 1130 (ISILTTGEGEGTVG). Residues 1131–1151 (IILTLAMNIMSTLQWAVNSSI) traverse the membrane as a helical segment. Topologically, residues 1152–1481 (DVDSLMRSVS…TEEEVQETRL (330 aa)) are cytoplasmic. The 234-residue stretch at 1211-1444 (MTIKDLTAKY…KSLFRQAISH (234 aa)) folds into the ABC transporter 2 domain. Residues tyrosine 1220 and 1245–1252 (GRTGSGKS) contribute to the ATP site. Residues 1387 to 1481 (RALKQAFADC…TEEEVQETRL (95 aa)) form an interaction with GORASP2 region. A lipid anchor (S-palmitoyl cysteine) is attached at cysteine 1396. 2 positions are modified to phosphoserine: serine 1445 and serine 1457. The segment at 1453–1481 (HRNSSKYKSQPQIASLKEETEEEVQETRL) is disordered. Residues 1471–1481 (ETEEEVQETRL) show a composition bias toward acidic residues. Residues 1479 to 1481 (TRL) carry the PDZ-binding motif.

It belongs to the ABC transporter superfamily. ABCC family. CFTR transporter (TC 3.A.1.202) subfamily. Monomer; does not require oligomerization for channel activity. May form oligomers in the membrane. Interacts with SLC26A3, SLC26A6 and NHERF1. Interacts with SHANK2. Interacts with MYO6. Interacts (via C-terminus) with GOPC (via PDZ domain); this promotes CFTR internalization and thereby decreases channel activity. Interacts with SLC4A7 through NHERF1. Found in a complex with MYO5B and RAB11A. Interacts with ANO1. Interacts with SLC26A8. Interacts with AHCYL1; the interaction increases CFTR activity. Interacts with CSE1L. The core-glycosylated form interacts with GORASP2 (via PDZ GRASP-type 1 domain) in respone to ER stress. Interacts with MARCHF2; the interaction leads to CFTR ubiqtuitination and degradation. Interacts with ADGRG2. In terms of processing, N-glycosylated. Post-translationally, phosphorylated; cAMP treatment promotes phosphorylation and activates the channel. Dephosphorylation decreases the ATPase activity (in vitro). Phosphorylation at PKA sites activates the channel. Phosphorylation at PKC sites enhances the response to phosphorylation by PKA. Phosphorylated by AMPK; this inhibits channel activity. Ubiquitinated, leading to its degradation in the lysosome. Deubiquitination by USP10 in early endosomes enhances its endocytic recycling to the cell membrane. Ubiquitinated by RNF185 during ER stress. Ubiquitinated by MARCHF2.

It is found in the apical cell membrane. The protein resides in the early endosome membrane. It localises to the cell membrane. Its subcellular location is the recycling endosome membrane. The protein localises to the endoplasmic reticulum membrane. It is found in the nucleus. It catalyses the reaction ATP + H2O + closed Cl(-) channel = ADP + phosphate + open Cl(-) channel.. The catalysed reaction is chloride(in) = chloride(out). The enzyme catalyses hydrogencarbonate(in) = hydrogencarbonate(out). It carries out the reaction ATP + H2O = ADP + phosphate + H(+). Its function is as follows. Epithelial ion channel that plays an important role in the regulation of epithelial ion and water transport and fluid homeostasis. Mediates the transport of chloride ions across the cell membrane. Possesses an intrinsic ATPase activity and utilizes ATP to gate its channel; the passive flow of anions through the channel is gated by cycles of ATP binding and hydrolysis by the ATP-binding domains. The ion channel is also permeable to HCO(3)(-); selectivity depends on the extracellular chloride concentration. Exerts its function also by modulating the activity of other ion channels and transporters. Contributes to the regulation of the pH and the ion content of the epithelial fluid layer. Modulates the activity of the epithelial sodium channel (ENaC) complex, in part by regulating the cell surface expression of the ENaC complex. May regulate bicarbonate secretion and salvage in epithelial cells by regulating the transporter SLC4A7. Can inhibit the chloride channel activity of ANO1. Plays a role in the chloride and bicarbonate homeostasis during sperm epididymal maturation and capacitation. This is Cystic fibrosis transmembrane conductance regulator from Aotus nancymaae (Ma's night monkey).